The primary structure comprises 172 residues: Propanediol dehydratase small subunit (172 aa).

This sequence belongs to the diol/glycerol dehydratase small subunit family. As to quaternary structure, the propanediol dehydratase enzyme is a heterotrimeric complex composed of a large (PduC), a medium (PduD) and a small (PduE) subunit. Requires adenosylcob(III)alamin as cofactor.

It localises to the bacterial microcompartment. The enzyme catalyses propane-1,2-diol = propanal + H2O. Its pathway is polyol metabolism; 1,2-propanediol degradation. In terms of biological role, part of the PduCDE complex that catalyzes the dehydration of 1,2-propanediol (1,2-PD) to propionaldehyde. Localized in the bacterial microcompartment (BMC) dedicated to 1,2-PD degradation. Functionally, expression of a cosmid containing the full 21-gene pdu operon in E.coli allows E.coli to grow on 1,2-propanediol (1,2-PD) with the appearance of BMCs in its cytoplasm. Its function is as follows. The 1,2-PD-specific bacterial microcompartment (BMC) concentrates low levels of 1,2-PD catabolic enzymes, concentrates volatile reaction intermediates thus enhancing pathway flux and keeps the level of toxic, mutagenic propionaldehyde low. The chain is Propanediol dehydratase small subunit from Citrobacter freundii.